A 166-amino-acid polypeptide reads, in one-letter code: MSDSPKPQLPPSPQGDHCLVHQQELEAVTEKWFEIMVRVQPHHTDYGGVVWHGTYLTWLETARVECLRSIGVDFADLVKLGCDLPVVSLALRYHRAIRLGQTAVIKVQMQEIQKVRLEWQNQIVCLETGEPCVTGKITLVAIDPAKGKIMRRLPPVVQEHLLKLRQ.

Asp-45 is an active-site residue.

It belongs to the 4-hydroxybenzoyl-CoA thioesterase family.

The chain is Putative esterase sll0410 from Synechocystis sp. (strain ATCC 27184 / PCC 6803 / Kazusa).